We begin with the raw amino-acid sequence, 400 residues long: S-adenosylmethionine synthase (400 aa).

137–142 (GEGSGD) serves as a coordination point for ATP.

It belongs to the AdoMet synthase 2 family. Mg(2+) serves as cofactor.

The enzyme catalyses L-methionine + ATP + H2O = S-adenosyl-L-methionine + phosphate + diphosphate. Its pathway is amino-acid biosynthesis; S-adenosyl-L-methionine biosynthesis; S-adenosyl-L-methionine from L-methionine: step 1/1. Catalyzes the formation of S-adenosylmethionine from methionine and ATP. The sequence is that of S-adenosylmethionine synthase from Haloarcula marismortui (strain ATCC 43049 / DSM 3752 / JCM 8966 / VKM B-1809) (Halobacterium marismortui).